A 975-amino-acid polypeptide reads, in one-letter code: Monofunctional C1-tetrahydrofolate synthase, mitochondrial (975 aa).

The N-terminal 30 residues, 1-30 (MSARLPFVLRRLARPQHPGSPRRLPSLCRA), are a transit peptide targeting the mitochondrion. The disordered stretch occupies residues 13-45 (ARPQHPGSPRRLPSLCRASSGRGSGCGGGEGLL). Positions 31-345 (SSGRGSGCGG…REQQHRRWRL (315 aa)) are methylenetetrahydrofolate dehydrogenase and cyclohydrolase. Residues 34–44 (RGSGCGGGEGL) show a composition bias toward gly residues. The residue at position 187 (Lys187) is an N6-acetyllysine; alternate. The residue at position 187 (Lys187) is an N6-succinyllysine; alternate. A formyltetrahydrofolate synthetase region spans residues 346–975 (HCLKLQPLSP…TETEQVKGLF (630 aa)). Ser354 bears the Phosphoserine mark. 420–427 (TPLGEGKS) is a binding site for ATP. Position 593 is an N6-succinyllysine (Lys593).

The protein in the N-terminal section; belongs to the tetrahydrofolate dehydrogenase/cyclohydrolase family. In the C-terminal section; belongs to the formate--tetrahydrofolate ligase family. As to quaternary structure, homodimer.

The protein localises to the mitochondrion. It catalyses the reaction (6S)-5,6,7,8-tetrahydrofolate + formate + ATP = (6R)-10-formyltetrahydrofolate + ADP + phosphate. It participates in one-carbon metabolism; tetrahydrofolate interconversion. In terms of biological role, may provide the missing metabolic reaction required to link the mitochondria and the cytoplasm in the mammalian model of one-carbon folate metabolism complementing thus the enzymatic activities of MTHFD2. The chain is Monofunctional C1-tetrahydrofolate synthase, mitochondrial (MTHFD1L) from Bos taurus (Bovine).